A 35-amino-acid polypeptide reads, in one-letter code: Photosystem II reaction center protein T (35 aa).

The helical transmembrane segment at 3 to 23 (ALVYTFLLVSTLGIIFFAIFF) threads the bilayer.

It belongs to the PsbT family. PSII is composed of 1 copy each of membrane proteins PsbA, PsbB, PsbC, PsbD, PsbE, PsbF, PsbH, PsbI, PsbJ, PsbK, PsbL, PsbM, PsbT, PsbY, PsbZ, Psb30/Ycf12, at least 3 peripheral proteins of the oxygen-evolving complex and a large number of cofactors. It forms dimeric complexes.

The protein localises to the plastid. It is found in the chloroplast thylakoid membrane. Its function is as follows. Found at the monomer-monomer interface of the photosystem II (PS II) dimer, plays a role in assembly and dimerization of PSII. PSII is a light-driven water plastoquinone oxidoreductase, using light energy to abstract electrons from H(2)O, generating a proton gradient subsequently used for ATP formation. This is Photosystem II reaction center protein T from Amborella trichopoda.